A 475-amino-acid polypeptide reads, in one-letter code: Histidine--tRNA ligase (475 aa).

It belongs to the class-II aminoacyl-tRNA synthetase family. As to quaternary structure, homodimer.

The protein localises to the cytoplasm. It carries out the reaction tRNA(His) + L-histidine + ATP = L-histidyl-tRNA(His) + AMP + diphosphate + H(+). The polypeptide is Histidine--tRNA ligase (Flavobacterium johnsoniae (strain ATCC 17061 / DSM 2064 / JCM 8514 / BCRC 14874 / CCUG 350202 / NBRC 14942 / NCIMB 11054 / UW101) (Cytophaga johnsonae)).